Here is a 216-residue protein sequence, read N- to C-terminus: Thymidine kinase (216 aa).

Residues 9–16 (GTMDCGKS) and 86–89 (DEAQ) each bind ATP. Residue glutamate 87 is the Proton acceptor of the active site.

Belongs to the thymidine kinase family. As to quaternary structure, homotetramer.

Its subcellular location is the cytoplasm. It catalyses the reaction thymidine + ATP = dTMP + ADP + H(+). This chain is Thymidine kinase, found in Streptomyces coelicolor (strain ATCC BAA-471 / A3(2) / M145).